A 346-amino-acid chain; its full sequence is Probable long-chain-alcohol O-fatty-acyltransferase 6 (346 aa).

Transmembrane regions (helical) follow at residues 7–27 (LFIQVWVSAIISVTYCYYLTP), 36–56 (LLSVLPVCVLFLIIPIFFSTV), 59–79 (SFTIAFFLSGLAVPKLILFAL), 116–136 (FPKWVFALKVFIFGALLLQAY), 146–166 (FLLGLYALHIYLELEISLTLI), 228–248 (FFAIFATFLVSGVAHEILYFY), 255–275 (TWEVTWFFVLHGFCMAAEVAL), and 289–309 (PAVSRLLTVGFVFVTGVWLFS).

This sequence belongs to the wax synthase family.

It is found in the membrane. The catalysed reaction is a long chain fatty alcohol + a fatty acyl-CoA = a wax ester + CoA. Functionally, catalyzes the final step in the synthesis of long-chain linear esters (waxes). This chain is Probable long-chain-alcohol O-fatty-acyltransferase 6 (AT6), found in Arabidopsis thaliana (Mouse-ear cress).